We begin with the raw amino-acid sequence, 437 residues long: Na(+)/H(+) antiporter NhaA (437 aa).

The next 11 membrane-spanning stretches (helical) occupy residues 29 to 49, 74 to 94, 111 to 131, 139 to 159, 168 to 188, 196 to 216, 229 to 249, 307 to 327, 341 to 361, 376 to 396, and 411 to 431; these read TAGIILLLSTLLALGLANTAW, LKHWINDGLMTFFFFVIALEL, LPVAAALGGMAAPAGIYLLLV, GWGTVMSTDTAFVIGCLALLG, LFLLSLAIFDDIGAILIVAVG, VALGTGGLGFAFVAGIALLGI, IWLAFDASGVHATLVGVILGL, IALHPWVAFAIMPLFAVSNAG, IAIVVAFVVGKPAGIVLFSFL, WSLLAAGSLLTGIGFTMALFI, and LGVLGASVISAALGFMALTLL.

This sequence belongs to the NhaA Na(+)/H(+) (TC 2.A.33) antiporter family.

It is found in the cell inner membrane. It catalyses the reaction Na(+)(in) + 2 H(+)(out) = Na(+)(out) + 2 H(+)(in). In terms of biological role, na(+)/H(+) antiporter that extrudes sodium in exchange for external protons. The polypeptide is Na(+)/H(+) antiporter NhaA (Rhizobium meliloti (strain 1021) (Ensifer meliloti)).